A 58-amino-acid polypeptide reads, in one-letter code: Small ribosomal subunit protein bS21 (58 aa).

The tract at residues 27 to 58 is disordered; it reads GVLSEARKHEHYEKPSVKRKKKSEAARKRKFK. A compositionally biased stretch (basic and acidic residues) spans 31–42; the sequence is EARKHEHYEKPS. Residues 43–58 are compositionally biased toward basic residues; it reads VKRKKKSEAARKRKFK.

Belongs to the bacterial ribosomal protein bS21 family.

The polypeptide is Small ribosomal subunit protein bS21 (Desulfitobacterium hafniense (strain DSM 10664 / DCB-2)).